The primary structure comprises 60 residues: UI (60 aa).

The span at A1–G14 shows a compositional bias: low complexity. The tract at residues A1 to D22 is disordered. Position 60 is a valine amide (V60).

This sequence belongs to the sauvagine/corticotropin-releasing factor/urotensin I family.

It localises to the secreted. Functionally, urotensin is found in the teleost caudal neurosecretory system. It has a suggested role in osmoregulation and as a corticotropin-releasing factor. The non-hormonal portion of this precursor may be a urotensin binding protein, urophysin. The polypeptide is UI (Platichthys flesus (European flounder)).